A 223-amino-acid polypeptide reads, in one-letter code: Ribonuclease 3 (223 aa).

Positions Leu3 to Gly125 constitute an RNase III domain. Mg(2+) is bound at residue Glu38. Asp42 is a catalytic residue. 2 residues coordinate Mg(2+): Asp111 and Glu114. Residue Glu114 is part of the active site. The region spanning Asp152–Thr222 is the DRBM domain.

This sequence belongs to the ribonuclease III family. As to quaternary structure, homodimer. It depends on Mg(2+) as a cofactor.

The protein localises to the cytoplasm. It catalyses the reaction Endonucleolytic cleavage to 5'-phosphomonoester.. Functionally, digests double-stranded RNA. Involved in the processing of primary rRNA transcript to yield the immediate precursors to the large and small rRNAs (23S and 16S). Processes some mRNAs, and tRNAs when they are encoded in the rRNA operon. Processes pre-crRNA and tracrRNA of type II CRISPR loci if present in the organism. This chain is Ribonuclease 3, found in Actinobacillus pleuropneumoniae serotype 5b (strain L20).